The following is a 767-amino-acid chain: Cilia- and flagella-associated protein 91 (767 aa).

A disordered region spans residues 1–29 (MSHAVTIQEPQAQPQVSQTRYRERSRAGS). Over residues 8–19 (QEPQAQPQVSQT) the composition is skewed to polar residues.

This sequence belongs to the CFAP91 family. As to quaternary structure, part of a complex containing MYCBP, AKAP1 and PRKAR2B. Interacts with MYCBP and AKAP1. Interacts with CFAP61. Post-translationally, phosphorylated by PKA.

Its subcellular location is the cytoplasm. It is found in the mitochondrion. The protein resides in the cytoskeleton. The protein localises to the cilium axoneme. Involved in sperm flagellum axonemal organization and function. May regulate cilium motility through its role in the assembly of the axonemal radial spokes. The protein is Cilia- and flagella-associated protein 91 (CFAP91) of Macaca fascicularis (Crab-eating macaque).